A 288-amino-acid chain; its full sequence is Diaminopimelate epimerase (288 aa).

Substrate-binding residues include N14 and N67. C76 functions as the Proton donor in the catalytic mechanism. Residues 77 to 78 (GN), N166, N199, and 217 to 218 (ER) contribute to the substrate site. C226 serves as the catalytic Proton acceptor. 227–228 (GT) lines the substrate pocket.

The protein belongs to the diaminopimelate epimerase family. In terms of assembly, homodimer.

Its subcellular location is the cytoplasm. The catalysed reaction is (2S,6S)-2,6-diaminopimelate = meso-2,6-diaminopimelate. It participates in amino-acid biosynthesis; L-lysine biosynthesis via DAP pathway; DL-2,6-diaminopimelate from LL-2,6-diaminopimelate: step 1/1. Functionally, catalyzes the stereoinversion of LL-2,6-diaminopimelate (L,L-DAP) to meso-diaminopimelate (meso-DAP), a precursor of L-lysine and an essential component of the bacterial peptidoglycan. In Bacillus thuringiensis (strain Al Hakam), this protein is Diaminopimelate epimerase.